A 276-amino-acid polypeptide reads, in one-letter code: Formamidopyrimidine-DNA glycosylase (276 aa).

Residue P2 is the Schiff-base intermediate with DNA of the active site. The active-site Proton donor is the E3. K60 functions as the Proton donor; for beta-elimination activity in the catalytic mechanism. H93 and R112 together coordinate DNA. The segment at 240 to 274 adopts an FPG-type zinc-finger fold; sequence NVYGKKGEPCVTCGTILEKTVVGGRGTHYCPICQP. The active-site Proton donor; for delta-elimination activity is the R264.

It belongs to the FPG family. Monomer. Zn(2+) serves as cofactor.

The catalysed reaction is Hydrolysis of DNA containing ring-opened 7-methylguanine residues, releasing 2,6-diamino-4-hydroxy-5-(N-methyl)formamidopyrimidine.. It carries out the reaction 2'-deoxyribonucleotide-(2'-deoxyribose 5'-phosphate)-2'-deoxyribonucleotide-DNA = a 3'-end 2'-deoxyribonucleotide-(2,3-dehydro-2,3-deoxyribose 5'-phosphate)-DNA + a 5'-end 5'-phospho-2'-deoxyribonucleoside-DNA + H(+). Functionally, involved in base excision repair of DNA damaged by oxidation or by mutagenic agents. Acts as a DNA glycosylase that recognizes and removes damaged bases. Has a preference for oxidized purines, such as 7,8-dihydro-8-oxoguanine (8-oxoG). Has AP (apurinic/apyrimidinic) lyase activity and introduces nicks in the DNA strand. Cleaves the DNA backbone by beta-delta elimination to generate a single-strand break at the site of the removed base with both 3'- and 5'-phosphates. This is Formamidopyrimidine-DNA glycosylase from Bacillus cereus (strain ATCC 14579 / DSM 31 / CCUG 7414 / JCM 2152 / NBRC 15305 / NCIMB 9373 / NCTC 2599 / NRRL B-3711).